A 151-amino-acid polypeptide reads, in one-letter code: Major latex allergen Hev b 5 (151 aa).

The segment at 1–151 is disordered; sequence MASVEVESAA…TEVPVEKTEE (151 aa). Residue alanine 2 is modified to N-acetylalanine. Residues 17-31 are compositionally biased toward basic and acidic residues; sequence ETPEVTKAEETKTEE. Low complexity-rich tracts occupy residues 36 to 45 and 53 to 64; these read PASEQETADA and TAAPAEPEAPAP. 3 stretches are compositionally biased toward basic and acidic residues: residues 65 to 80, 103 to 113, and 122 to 133; these read ETEK…KTEE, EEPKHETKETE, and EGEKPAEEEKPI. Over residues 134–144 the composition is skewed to low complexity; the sequence is TEAAETATTEV.

It to kiwi fruit protein PKIWI501. In terms of processing, the N-terminus is blocked.

The protein is Major latex allergen Hev b 5 of Hevea brasiliensis (Para rubber tree).